Here is a 973-residue protein sequence, read N- to C-terminus: Serine/threonine-protein kinase atg1 (973 aa).

The 306-residue stretch at 23-328 (YTRLDEIGRG…FPDFFQNGVI (306 aa)) folds into the Protein kinase domain. ATP-binding positions include 29–37 (IGRGSFATV) and K52. D166 serves as the catalytic Proton acceptor. 4 disordered regions span residues 338–446 (DDLP…PGRQ), 460–482 (RQKG…DKLR), 523–587 (GNIS…QSPT), and 949–973 (PTPS…TPPK). Positions 387–407 (GLTQRPPSQNQRFGTPQTTTP) are enriched in polar residues. The segment covering 523–537 (GNISRGAQTGALSRR) has biased composition (polar residues). Basic and acidic residues predominate over residues 566 to 582 (SRADSMHNRQGSYERRY). The span at 951–965 (PSANVPSKMASSNPV) shows a compositional bias: polar residues.

This sequence belongs to the protein kinase superfamily. Ser/Thr protein kinase family. APG1/unc-51/ULK1 subfamily. Homodimer. Forms a ternary complex with ATG13 and ATG17.

The protein resides in the cytoplasm. It localises to the preautophagosomal structure membrane. It catalyses the reaction L-seryl-[protein] + ATP = O-phospho-L-seryl-[protein] + ADP + H(+). The catalysed reaction is L-threonyl-[protein] + ATP = O-phospho-L-threonyl-[protein] + ADP + H(+). Serine/threonine protein kinase involved in the cytoplasm to vacuole transport (Cvt) and found to be essential in autophagy, where it is required for the formation of autophagosomes. Involved in the clearance of protein aggregates which cannot be efficiently cleared by the proteasome. Required for selective autophagic degradation of the nucleus (nucleophagy) as well as for mitophagy which contributes to regulate mitochondrial quantity and quality by eliminating the mitochondria to a basal level to fulfill cellular energy requirements and preventing excess ROS production. Also involved in endoplasmic reticulum-specific autophagic process, in selective removal of ER-associated degradation (ERAD) substrates. Plays a key role in ATG9 and ATG23 cycling through the pre-autophagosomal structure and is necessary to promote ATG18 binding to ATG9 through phosphorylation of ATG9. Catalyzes phosphorylation of ATG4, decreasing the interaction between ATG4 and ATG8 and impairing deconjugation of PE-conjugated forms of ATG8. This Aspergillus fumigatus (strain ATCC MYA-4609 / CBS 101355 / FGSC A1100 / Af293) (Neosartorya fumigata) protein is Serine/threonine-protein kinase atg1.